A 187-amino-acid chain; its full sequence is Elongation factor P (187 aa).

Residue Lys34 is modified to N6-(3,6-diaminohexanoyl)-5-hydroxylysine.

It belongs to the elongation factor P family. Post-translationally, may be beta-lysylated on the epsilon-amino group of Lys-34 by the combined action of EpmA and EpmB, and then hydroxylated on the C5 position of the same residue by EpmC (if this protein is present). Lysylation is critical for the stimulatory effect of EF-P on peptide-bond formation. The lysylation moiety may extend toward the peptidyltransferase center and stabilize the terminal 3-CCA end of the tRNA. Hydroxylation of the C5 position on Lys-34 may allow additional potential stabilizing hydrogen-bond interactions with the P-tRNA.

Its subcellular location is the cytoplasm. It participates in protein biosynthesis; polypeptide chain elongation. In terms of biological role, involved in peptide bond synthesis. Alleviates ribosome stalling that occurs when 3 or more consecutive Pro residues or the sequence PPG is present in a protein, possibly by augmenting the peptidyl transferase activity of the ribosome. Modification of Lys-34 is required for alleviation. The protein is Elongation factor P of Thioalkalivibrio sulfidiphilus (strain HL-EbGR7).